The sequence spans 520 residues: Probable E3 ubiquitin-protein ligase XBOS33 (520 aa).

ANK repeat units follow at residues 44-73 (GLNSPLHFAAAKGHLDIVTLLLEKGADVNV), 77-106 (CGQTALMHACRHGHWEVVQMLLLFRCNVTR), 111-140 (SGRTALHFAAHDGLVRCVRLLLADFVPSAP), 185-214 (GGVTALHMAALNGHFDCMQLLIDLGANVSA), and 228-258 (AGSTPLHYAAGGGNAECCQLLLSKGASKLTL). An RING-type zinc finger spans residues 327 to 377 (CAVCLERSCSVAAEGCCHEFCIKCALYLCSTSNTRVEFTGPPGSIPCPLCR). Polar residues predominate over residues 467–479 (QDGSEVQSPQPSH). The disordered stretch occupies residues 467 to 493 (QDGSEVQSPQPSHCASMEMDKREQQDL). Basic and acidic residues predominate over residues 484-493 (EMDKREQQDL).

The enzyme catalyses S-ubiquitinyl-[E2 ubiquitin-conjugating enzyme]-L-cysteine + [acceptor protein]-L-lysine = [E2 ubiquitin-conjugating enzyme]-L-cysteine + N(6)-ubiquitinyl-[acceptor protein]-L-lysine.. It participates in protein modification; protein ubiquitination. The chain is Probable E3 ubiquitin-protein ligase XBOS33 (XBOS33) from Oryza sativa subsp. japonica (Rice).